Here is a 288-residue protein sequence, read N- to C-terminus: Bifunctional protein FolD (288 aa).

Residues 166 to 168, Ser191, and Val232 each bind NADP(+); that span reads GRS.

This sequence belongs to the tetrahydrofolate dehydrogenase/cyclohydrolase family. As to quaternary structure, homodimer.

The catalysed reaction is (6R)-5,10-methylene-5,6,7,8-tetrahydrofolate + NADP(+) = (6R)-5,10-methenyltetrahydrofolate + NADPH. It catalyses the reaction (6R)-5,10-methenyltetrahydrofolate + H2O = (6R)-10-formyltetrahydrofolate + H(+). It participates in one-carbon metabolism; tetrahydrofolate interconversion. Its function is as follows. Catalyzes the oxidation of 5,10-methylenetetrahydrofolate to 5,10-methenyltetrahydrofolate and then the hydrolysis of 5,10-methenyltetrahydrofolate to 10-formyltetrahydrofolate. The chain is Bifunctional protein FolD from Roseiflexus sp. (strain RS-1).